The primary structure comprises 406 residues: S-adenosylmethionine synthase (406 aa).

An ATP-binding site is contributed by H16. Residue D18 participates in Mg(2+) binding. Position 44 (E44) interacts with K(+). The L-methionine site is built by E57 and Q100. Residues 100 to 110 are flexible loop; the sequence is QSVDIAQGVDR. Residues 165 to 167, D241, 247 to 248, A264, and K268 each bind ATP; these read DAK and RK. D241 contacts L-methionine. Residue K272 participates in L-methionine binding.

This sequence belongs to the AdoMet synthase family. Homotetramer; dimer of dimers. Mg(2+) serves as cofactor. It depends on K(+) as a cofactor.

The protein localises to the cytoplasm. It carries out the reaction L-methionine + ATP + H2O = S-adenosyl-L-methionine + phosphate + diphosphate. It participates in amino-acid biosynthesis; S-adenosyl-L-methionine biosynthesis; S-adenosyl-L-methionine from L-methionine: step 1/1. Catalyzes the formation of S-adenosylmethionine (AdoMet) from methionine and ATP. The overall synthetic reaction is composed of two sequential steps, AdoMet formation and the subsequent tripolyphosphate hydrolysis which occurs prior to release of AdoMet from the enzyme. This Chromohalobacter salexigens (strain ATCC BAA-138 / DSM 3043 / CIP 106854 / NCIMB 13768 / 1H11) protein is S-adenosylmethionine synthase.